The following is a 179-amino-acid chain: Ferric nitrobindin-like protein (179 aa).

A GXWXGXG motif is present at residues 17–23 (GRWEGLG).

It belongs to the nitrobindin family.

The sequence is that of Ferric nitrobindin-like protein from Thermobifida fusca (strain YX).